A 467-amino-acid chain; its full sequence is tRNA-2-methylthio-N(6)-dimethylallyladenosine synthase (467 aa).

The region spanning 4-124 is the MTTase N-terminal domain; sequence RKLFIKSYGC…LPEMVAKVER (121 aa). Residues C13, C49, C87, C161, C165, and C168 each contribute to the [4Fe-4S] cluster site. The Radical SAM core domain maps to 147–379; it reads QAHGPSAFLS…QARLVEIQQA (233 aa). One can recognise a TRAM domain in the interval 382–444; the sequence is QACVGRPMDV…SNSLAARLVE (63 aa).

Belongs to the methylthiotransferase family. MiaB subfamily. In terms of assembly, monomer. [4Fe-4S] cluster is required as a cofactor.

It is found in the cytoplasm. The enzyme catalyses N(6)-dimethylallyladenosine(37) in tRNA + (sulfur carrier)-SH + AH2 + 2 S-adenosyl-L-methionine = 2-methylsulfanyl-N(6)-dimethylallyladenosine(37) in tRNA + (sulfur carrier)-H + 5'-deoxyadenosine + L-methionine + A + S-adenosyl-L-homocysteine + 2 H(+). Functionally, catalyzes the methylthiolation of N6-(dimethylallyl)adenosine (i(6)A), leading to the formation of 2-methylthio-N6-(dimethylallyl)adenosine (ms(2)i(6)A) at position 37 in tRNAs that read codons beginning with uridine. The protein is tRNA-2-methylthio-N(6)-dimethylallyladenosine synthase of Rhodospirillum rubrum (strain ATCC 11170 / ATH 1.1.1 / DSM 467 / LMG 4362 / NCIMB 8255 / S1).